The chain runs to 107 residues: Probable insulin-like peptide beta-type 3 (107 aa).

An N-terminal signal peptide occupies residues 1-19 (MKLSVVLALFIIFQLGAAS). The propeptide occupies 20–55 (LMRNWMFDFEKELEHDYDDSEIGFHNIHSLMARSRR). 4 cysteine pairs are disulfide-bonded: Cys-62–Cys-90, Cys-74–Cys-103, Cys-78–Cys-104, and Cys-89–Cys-94.

This sequence belongs to the insulin family.

It localises to the secreted. The chain is Probable insulin-like peptide beta-type 3 (ins-3) from Caenorhabditis elegans.